A 119-amino-acid chain; its full sequence is Beta-2-microglobulin (119 aa).

An N-terminal signal peptide occupies residues 1–20; the sequence is MVCSVVVALLALLSLSGLEA. Residues 25–114 enclose the Ig-like C1-type domain; the sequence is PKIQVYSRHP…VTFSTPKTVK (90 aa). A disulfide bridge connects residues Cys45 and Cys100.

This sequence belongs to the beta-2-microglobulin family. As to quaternary structure, heterodimer of an alpha chain and a beta chain. Beta-2-microglobulin is the beta-chain of major histocompatibility complex class I molecules.

Its subcellular location is the secreted. In terms of biological role, component of the class I major histocompatibility complex (MHC). Involved in the presentation of peptide antigens to the immune system. This is Beta-2-microglobulin (B2M) from Cebuella pygmaea (Pygmy marmoset).